A 342-amino-acid chain; its full sequence is MTYTLLRPLLFLLDAETAHTLTLDTLGLLQKTGLLPNRTIYCTPVRAMGLDFPNPVGLAAGLDKNGAYISALARLGFGFIEVGTVTPRPQPGNPRPRLFRVPQAEAITNRMGFNNVGIDKLIENVRQADYQGILGINIGKNADTPLQNAIDDYLICLRKAYPYASYVTVNISSPNTKQLRQLQNETELEQLLGALKTEQTRLSDQHGHYTPLAIKIAPDLESAQIEAIASLLLKHRMDAVIATNTTIARDGLEHLPHGDEPGGLSGAPLTERSTAVIRQLAMHLQQAIPIIGAGGIMSSLDAQAKIKAGASLVQVYSGLIYRGPALVSEITSLLCSRSTYAG.

FMN is bound by residues 60–64 (AGLDK) and threonine 84. Residue lysine 64 coordinates substrate. Residue 109–113 (NRMGF) coordinates substrate. Positions 137 and 170 each coordinate FMN. Residue asparagine 170 participates in substrate binding. The active-site Nucleophile is the serine 173. Asparagine 175 serves as a coordination point for substrate. FMN contacts are provided by lysine 215 and threonine 243. Substrate is bound at residue 244-245 (NT). FMN contacts are provided by residues glycine 266, glycine 295, and 316–317 (YS).

Belongs to the dihydroorotate dehydrogenase family. Type 2 subfamily. As to quaternary structure, monomer. FMN is required as a cofactor.

It is found in the cell membrane. The catalysed reaction is (S)-dihydroorotate + a quinone = orotate + a quinol. Its pathway is pyrimidine metabolism; UMP biosynthesis via de novo pathway; orotate from (S)-dihydroorotate (quinone route): step 1/1. In terms of biological role, catalyzes the conversion of dihydroorotate to orotate with quinone as electron acceptor. The protein is Dihydroorotate dehydrogenase (quinone) of Nitrosomonas eutropha (strain DSM 101675 / C91 / Nm57).